An 887-amino-acid polypeptide reads, in one-letter code: Pyruvate dehydrogenase E1 component (887 aa).

In terms of assembly, homodimer. Part of the PDH complex, consisting of multiple copies of pyruvate dehydrogenase (E1), dihydrolipoamide acetyltransferase (E2) and lipoamide dehydrogenase (E3). Thiamine diphosphate serves as cofactor.

The enzyme catalyses N(6)-[(R)-lipoyl]-L-lysyl-[protein] + pyruvate + H(+) = N(6)-[(R)-S(8)-acetyldihydrolipoyl]-L-lysyl-[protein] + CO2. Its function is as follows. Component of the pyruvate dehydrogenase (PDH) complex, that catalyzes the overall conversion of pyruvate to acetyl-CoA and CO(2). The protein is Pyruvate dehydrogenase E1 component (aceE) of Buchnera aphidicola subsp. Baizongia pistaciae (strain Bp).